A 663-amino-acid chain; its full sequence is uncharacterized protein (663 aa).

207 to 214 contributes to the ATP binding site; the sequence is GPPGTGKT.

This sequence belongs to the DNA2/NAM7 helicase family.

This is an uncharacterized protein from Methanocaldococcus jannaschii (strain ATCC 43067 / DSM 2661 / JAL-1 / JCM 10045 / NBRC 100440) (Methanococcus jannaschii).